The primary structure comprises 278 residues: 4-deoxy-L-threo-5-hexosulose-uronate ketol-isomerase (278 aa).

H196, H198, E203, and H245 together coordinate Zn(2+).

The protein belongs to the KduI family. Zn(2+) serves as cofactor.

It carries out the reaction 5-dehydro-4-deoxy-D-glucuronate = 3-deoxy-D-glycero-2,5-hexodiulosonate. Its pathway is glycan metabolism; pectin degradation; 2-dehydro-3-deoxy-D-gluconate from pectin: step 4/5. Catalyzes the isomerization of 5-dehydro-4-deoxy-D-glucuronate to 3-deoxy-D-glycero-2,5-hexodiulosonate. The protein is 4-deoxy-L-threo-5-hexosulose-uronate ketol-isomerase of Salmonella agona (strain SL483).